Reading from the N-terminus, the 258-residue chain is Snake venom serine protease KN13 (258 aa).

A signal peptide spans 1 to 18; the sequence is MVLIRVLANLLILQLSYA. The propeptide occupies 19-24; the sequence is QRSSEL. Positions 25–249 constitute a Peptidase S1 domain; that stretch reads VIGGDECNIN…HLDWIQNIIA (225 aa). Cystine bridges form between C31–C163, C50–C66, C98–C256, C142–C210, C174–C189, and C200–C225. H65 functions as the Charge relay system in the catalytic mechanism. Residue N103 is glycosylated (N-linked (GlcNAc...) asparagine). The active-site Charge relay system is D110. N-linked (GlcNAc...) asparagine glycans are attached at residues N121, N122, N154, and N170. Catalysis depends on S204, which acts as the Charge relay system. N251 carries an N-linked (GlcNAc...) asparagine glycan.

It belongs to the peptidase S1 family. Snake venom subfamily. In terms of assembly, monomer. In terms of tissue distribution, expressed by the venom gland.

It is found in the secreted. In terms of biological role, snake venom serine protease that may act in the hemostasis system of the prey. The protein is Snake venom serine protease KN13 of Trimeresurus stejnegeri (Chinese green tree viper).